A 150-amino-acid chain; its full sequence is uncharacterized protein (150 aa).

3 consecutive transmembrane segments (helical) span residues 50–70, 80–100, and 127–147; these read VVSVILTLRGYVQLGYMVIHL, LYITITHYTIYIVNIVIQLWL, and KVVIRFYFHFYFFFSFLFFIE.

The protein resides in the membrane. This is an uncharacterized protein from Schizosaccharomyces pombe (strain 972 / ATCC 24843) (Fission yeast).